The primary structure comprises 337 residues: Transcription initiation factor IIB (337 aa).

A TFIIB-type zinc finger spans residues 37-68 (YTVECPECGSRALVRDYERAELVCSECGLVID). Residues Cys41, Cys44, Cys60, and Cys63 each coordinate Zn(2+). Repeat copies occupy residues 154 to 237 (SELD…SREL) and 248 to 329 (DYIP…ELAE).

It belongs to the TFIIB family.

Its function is as follows. Stabilizes TBP binding to an archaeal box-A promoter. Also responsible for recruiting RNA polymerase II to the pre-initiation complex (DNA-TBP-TFIIB). The chain is Transcription initiation factor IIB from Methanothrix thermoacetophila (strain DSM 6194 / JCM 14653 / NBRC 101360 / PT) (Methanosaeta thermophila).